Reading from the N-terminus, the 41-residue chain is Minor histocompatibility protein HB-1 (41 aa).

Positions 9-17 are loss of recognition by cytotoxic T lymphocyte (CTL); it reads EEKRGSLHV.

HB-1 forms a complex with MHC class I HLA-B44. In terms of tissue distribution, expressed in acute lymphoblastic leukemia B-cells and Epstein-Barr virus-transformed B-cells.

Functionally, precursor of the histocomplatibility antigen HB-1. More generally, minor histocomplatibility antigens (mHags) refer to immunogenic peptide which, when complexed with MHC, can generate an immune response after recognition by specific T-cells. The peptides are derived from polymorphic intracellular proteins, which are cleaved by normal pathways of antigen processing. The binding of these peptides to MHC class I or class II molecules and its expression on the cell surface can stimulate T-cell responses and thereby trigger graft rejection or graft-versus-host disease (GVHD) after hematopoietic stem cell transplantation from HLA-identical sibling donor. GVHD is a frequent complication after bone marrow transplantation (BMT), due to mismatch of minor histocomplatibility antigen in HLA-matched sibling marrow transplants. HB-1 is presented on the cell surface by MHC class I HLA-B44. This complex specifically elicits donor-cytotoxic T lymphocyte (CTL) reactivity in B-cell acute lymphoblastic leukemia (B-ALL) after treatment by HLA-identical allogenic bone marrow transplantation (BMT). It induces cell recognition and lysis by CTL. However, HB-1 restricted expression in B-ALL cells and not in normal tissues may allow a specific CTL reactivity against B-ALL without the risk of evoking graft-versus-host disease. The polypeptide is Minor histocompatibility protein HB-1 (HMHB1) (Homo sapiens (Human)).